The primary structure comprises 478 residues: Proline--tRNA ligase (478 aa).

It belongs to the class-II aminoacyl-tRNA synthetase family. ProS type 3 subfamily. As to quaternary structure, homodimer.

It is found in the cytoplasm. It carries out the reaction tRNA(Pro) + L-proline + ATP = L-prolyl-tRNA(Pro) + AMP + diphosphate. Catalyzes the attachment of proline to tRNA(Pro) in a two-step reaction: proline is first activated by ATP to form Pro-AMP and then transferred to the acceptor end of tRNA(Pro). The chain is Proline--tRNA ligase from Clostridium novyi (strain NT).